Reading from the N-terminus, the 564-residue chain is Proline--tRNA ligase (564 aa).

This sequence belongs to the class-II aminoacyl-tRNA synthetase family. ProS type 1 subfamily. Homodimer.

The protein localises to the cytoplasm. The catalysed reaction is tRNA(Pro) + L-proline + ATP = L-prolyl-tRNA(Pro) + AMP + diphosphate. Its function is as follows. Catalyzes the attachment of proline to tRNA(Pro) in a two-step reaction: proline is first activated by ATP to form Pro-AMP and then transferred to the acceptor end of tRNA(Pro). As ProRS can inadvertently accommodate and process non-cognate amino acids such as alanine and cysteine, to avoid such errors it has two additional distinct editing activities against alanine. One activity is designated as 'pretransfer' editing and involves the tRNA(Pro)-independent hydrolysis of activated Ala-AMP. The other activity is designated 'posttransfer' editing and involves deacylation of mischarged Ala-tRNA(Pro). The misacylated Cys-tRNA(Pro) is not edited by ProRS. The sequence is that of Proline--tRNA ligase from Coxiella burnetii (strain Dugway 5J108-111).